A 197-amino-acid polypeptide reads, in one-letter code: FMN-dependent NADH:quinone oxidoreductase 1 (197 aa).

FMN contacts are provided by residues Ser-10, 16–18 (SQS), 93–96 (MYNF), and 137–140 (TRGG).

The protein belongs to the azoreductase type 1 family. Homodimer. The cofactor is FMN.

It carries out the reaction 2 a quinone + NADH + H(+) = 2 a 1,4-benzosemiquinone + NAD(+). The catalysed reaction is N,N-dimethyl-1,4-phenylenediamine + anthranilate + 2 NAD(+) = 2-(4-dimethylaminophenyl)diazenylbenzoate + 2 NADH + 2 H(+). In terms of biological role, quinone reductase that provides resistance to thiol-specific stress caused by electrophilic quinones. Its function is as follows. Also exhibits azoreductase activity. Catalyzes the reductive cleavage of the azo bond in aromatic azo compounds to the corresponding amines. This chain is FMN-dependent NADH:quinone oxidoreductase 1, found in Photobacterium profundum (strain SS9).